The chain runs to 784 residues: uncharacterized protein (784 aa).

A 3'-5' exonuclease domain is found at 422–619 (IRIVQNEQDL…EVFQKIVEVV (198 aa)).

This is an uncharacterized protein from Caenorhabditis elegans.